A 450-amino-acid chain; its full sequence is Coiled-coil domain-containing protein 149-A (450 aa).

2 coiled-coil regions span residues 1-197 and 259-286; these read MANQ…DRRK and IQHQ…LEIS. Residues 290–358 form a disordered region; it reads SLPDDRTGRG…NGQVGTQLKE (69 aa). The segment covering 343-354 has biased composition (polar residues); sequence PSGTRTNGQVGT.

Belongs to the CCDC149 family.

The chain is Coiled-coil domain-containing protein 149-A (ccdc149a) from Danio rerio (Zebrafish).